A 135-amino-acid polypeptide reads, in one-letter code: Small ribosomal subunit protein uS11 (135 aa).

This sequence belongs to the universal ribosomal protein uS11 family. As to quaternary structure, part of the 30S ribosomal subunit. Interacts with proteins S7 and S18. Binds to IF-3.

In terms of biological role, located on the platform of the 30S subunit, it bridges several disparate RNA helices of the 16S rRNA. Forms part of the Shine-Dalgarno cleft in the 70S ribosome. In Polynucleobacter asymbioticus (strain DSM 18221 / CIP 109841 / QLW-P1DMWA-1) (Polynucleobacter necessarius subsp. asymbioticus), this protein is Small ribosomal subunit protein uS11.